Here is a 459-residue protein sequence, read N- to C-terminus: MSSASSSSAASLLLGREVDVFLSFCCQTSHGYFQNILIRNGIRTFLSYRCLEKRFGPIGQRTLKALEESRVAVVMTSTTKPCSVGFLEELLVILEFQEKGSLMVIPIFLTDLSFNVEEICRQHPEKAPSWRTALTKLTNLAAEYPLSQNLAGMDQSDLLNQIARDISLVVFYSGSNDSNALVAMDRHMKVVYDLLALEVNKEVRTIGIWGSAGVGKTTLARYIYAEIFVNFQTHVFLDNVENMKDKLLKFEGEEDPTVIISSYHDGHEITEARRKHRKILLIADDVNNMEQGKWIIEYANWFAPGSRVILISQNKNLLVDAGVMDVYEVRSLRYDEALQVFSHFAFKQPYPPSDFEELAVRAVHLAGFLPLGLRLLGSFLAGKGREEWVAALLKLKAKQGGHIMEVWKLMEATDDKGLEEWETAADIVERKESSQDKSQQESEVAADILIGKESSQDKQ.

The TIR domain maps to Arg16–Val170. Glu89 is a catalytic residue. Residues Val191 to Gly401 form the NB-ARC domain. Basic and acidic residues predominate over residues Glu429 to Gln440. Residues Glu429–Gln459 are disordered.

As to expression, mostly expressed in leaves, stems and roots, and, to a lower extent, in flowers and siliques.

The protein localises to the cytoplasm. The enzyme catalyses NAD(+) + H2O = ADP-D-ribose + nicotinamide + H(+). In terms of biological role, confers resistance to low temperatures by limiting chloroplast damage and cell death, thus maintaining growth homeostasis. This chain is Disease resistance protein CHL1, found in Arabidopsis thaliana (Mouse-ear cress).